We begin with the raw amino-acid sequence, 359 residues long: MKNSFGSLFSFTTWGESHGPSIGVVIDGCPAGLELHESDFVPAMKRRRPGNPGTSSRKENDIVQILSGVYKGKTTGTPLSLQILNTDVDSSPYENSERLYRPGHSQYTYEKKFGIVDPNGGGRSSARETACRVAAGVVAEKFLANQNIFTLAYLSSLGSLTLPHYLKISPELIHKIHTSPFYSPLPNEKIQEILTSLHDDSDSLGGVISFITSPIHDFLGEPLFGKVHALLASALMSIPAAKGFEIGKGFASAQMRGSQYTDPFVMEGENITLKSNNCGGTLGGITIGVPIEGRIAFKPTSSIKRPCATVTKTKKETTYRTPQTGRHDPCVAIRAVPVVEAMINLVLADLVLYQRCSKL.

R47 contributes to the NADP(+) binding site. FMN is bound by residues 123–125, G283, 298–302, and R326; these read RSS and KPTSS.

This sequence belongs to the chorismate synthase family. Homotetramer. Requires FMNH2 as cofactor.

It catalyses the reaction 5-O-(1-carboxyvinyl)-3-phosphoshikimate = chorismate + phosphate. It functions in the pathway metabolic intermediate biosynthesis; chorismate biosynthesis; chorismate from D-erythrose 4-phosphate and phosphoenolpyruvate: step 7/7. Catalyzes the anti-1,4-elimination of the C-3 phosphate and the C-6 proR hydrogen from 5-enolpyruvylshikimate-3-phosphate (EPSP) to yield chorismate, which is the branch point compound that serves as the starting substrate for the three terminal pathways of aromatic amino acid biosynthesis. This reaction introduces a second double bond into the aromatic ring system. The sequence is that of Chorismate synthase from Chlamydia pneumoniae (Chlamydophila pneumoniae).